The following is a 43-amino-acid chain: Hemolysin H1U (43 aa).

Methionine 1 bears the N-formylmethionine mark.

The protein belongs to the staphylococcal hemolytic protein family.

Its subcellular location is the secreted. In terms of biological role, virulence factor. Causes hemolysis of erythrocytes. Acts synergistically with beta-hemolysins from S.aureus ATCC 25923. Cytotoxic towards human dermal fibroblasts. This chain is Hemolysin H1U, found in Staphylococcus ureilyticus (Staphylococcus cohnii subsp. urealyticus).